Here is a 394-residue protein sequence, read N- to C-terminus: uncharacterized protein (394 aa).

A run of 11 helical transmembrane segments spans residues 10–30 (PALI…NYYA), 50–70 (FIVT…VPLG), 79–99 (IVSM…SQSL), 100–120 (AMMI…QILV), 138–158 (TIMS…GLLA), 166–186 (VFWV…RGLP), 218–238 (LLGC…AFLL), 243–263 (FNYS…GALG), 291–311 (WLAI…ILVL), 337–357 (LTAG…LISA), and 364–384 (GWAG…LVWW).

It belongs to the major facilitator superfamily.

The protein localises to the cell inner membrane. This is an uncharacterized protein from Escherichia coli O157:H7.